A 148-amino-acid chain; its full sequence is Large ribosomal subunit protein bL9 (148 aa).

This sequence belongs to the bacterial ribosomal protein bL9 family.

In terms of biological role, binds to the 23S rRNA. This chain is Large ribosomal subunit protein bL9, found in Bacillus cereus (strain ATCC 10987 / NRS 248).